The primary structure comprises 303 residues: Probable alpha-L-glutamate ligase 1 (303 aa).

The 184-residue stretch at 104-287 (LQLLSRKGVG…IAGLIYSFIE (184 aa)) folds into the ATP-grasp domain. ATP contacts are provided by residues lysine 141, 178–179 (EF), aspartate 187, and 211–213 (RSN). Residues aspartate 248, glutamate 260, and asparagine 262 each coordinate Mg(2+). Positions 248, 260, and 262 each coordinate Mn(2+).

The protein belongs to the RimK family. Mg(2+) serves as cofactor. Requires Mn(2+) as cofactor.

In Hahella chejuensis (strain KCTC 2396), this protein is Probable alpha-L-glutamate ligase 1.